The following is a 165-amino-acid chain: Aspartate carbamoyltransferase regulatory chain (165 aa).

Zn(2+) contacts are provided by Cys-121, Cys-126, Cys-149, and Cys-152.

This sequence belongs to the PyrI family. Contains catalytic and regulatory chains. Requires Zn(2+) as cofactor.

In terms of biological role, involved in allosteric regulation of aspartate carbamoyltransferase. The chain is Aspartate carbamoyltransferase regulatory chain from Methanoregula boonei (strain DSM 21154 / JCM 14090 / 6A8).